Reading from the N-terminus, the 173-residue chain is Mesencephalic astrocyte-derived neurotrophic factor homolog (173 aa).

The N-terminal stretch at Met1 to Ala22 is a signal peptide. 4 cysteine pairs are disulfide-bonded: Cys28–Cys114, Cys31–Cys103, Cys61–Cys72, and Cys148–Cys151.

This sequence belongs to the ARMET family.

It is found in the secreted. Functionally, required during the maturation of the embryonic nervous system for maintenance of neuronal and cuticular connectivity. Essential for maintenance of dopaminergic neurons and dopamine levels. This Drosophila simulans (Fruit fly) protein is Mesencephalic astrocyte-derived neurotrophic factor homolog.